The following is a 205-amino-acid chain: Protein Rcp (205 aa).

This sequence belongs to the NAD(P)-dependent epimerase/dehydratase family.

In Vibrio cholerae serotype O1 (strain ATCC 39315 / El Tor Inaba N16961), this protein is Protein Rcp (rcp).